Here is a 106-residue protein sequence, read N- to C-terminus: Iron-sulfur cluster assembly protein CyaY (106 aa).

This sequence belongs to the frataxin family.

In terms of biological role, involved in iron-sulfur (Fe-S) cluster assembly. May act as a regulator of Fe-S biogenesis. This is Iron-sulfur cluster assembly protein CyaY from Serratia proteamaculans (strain 568).